The chain runs to 316 residues: Metal cation efflux system protein CzcD (316 aa).

Topologically, residues 1–16 (MGAGHSHDHPGGNERS) are cytoplasmic. The helical transmembrane segment at 17–37 (LKIALALTGTFLIAEVVGGVM) threads the bilayer. Topologically, residues 38 to 46 (TKSLALISD) are periplasmic. Residues 47–67 (AAHMLTDTVALAIALAAIAIA) form a helical membrane-spanning segment. The Cytoplasmic portion of the chain corresponds to 68–81 (KRPADKKRTFGYYR). A helical transmembrane segment spans residues 82 to 102 (FEILAAAFNALLLFGVAIYIL). Over 103 to 114 (YEAYLRLKSPPQ) the chain is Periplasmic. The chain crosses the membrane as a helical span at residues 115-135 (IESTGMFVVAVLGLIINLISM). Topologically, residues 136 to 151 (RMLSSGQSSSLNVKGA) are cytoplasmic. 2 helical membrane passes run 152–172 (YLEVWSDLLGSVGVIAGAIII) and 174–194 (FTGWAWVDSAIAVLIGLWVLP). The Cytoplasmic portion of the chain corresponds to 195–316 (RTWILLKSSL…GSKSLAAGGN (122 aa)).

Belongs to the cation diffusion facilitator (CDF) transporter (TC 2.A.4) family. SLC30A subfamily.

Its subcellular location is the cell inner membrane. Efflux is inhibited by FCCP. Mediates a low-level metal ion resistance, probably by efflux of cations from the cytoplasm into the periplasm. Also mediates resistance to cobalt, cadmium and zinc via regulation of the Czc system. May repress expression of the Czc system by an export of the inducing cations. Binds and transports zinc. Can also bind cobalt, copper and nickel. This chain is Metal cation efflux system protein CzcD (czcD), found in Cupriavidus metallidurans (strain ATCC 43123 / DSM 2839 / NBRC 102507 / CH34) (Ralstonia metallidurans).